A 956-amino-acid chain; its full sequence is Zinc protease PQQL-like (956 aa).

Residue methionine 1 is modified to N-acetylmethionine. Histidine 85 is a binding site for Zn(2+). Glutamate 88 serves as the catalytic Proton acceptor. Histidine 89 contacts Zn(2+). Glutamate 165 is an active-site residue. Glutamate 172 contributes to the Zn(2+) binding site.

This sequence belongs to the peptidase M16 family. It depends on Zn(2+) as a cofactor.

This is Zinc protease PQQL-like from Arabidopsis thaliana (Mouse-ear cress).